The sequence spans 741 residues: Methionine--tRNA ligase (741 aa).

Residues 11–21 (PYANGPIHAGH) carry the 'HIGH' region motif. Cysteine 143, cysteine 146, cysteine 156, and cysteine 159 together coordinate Zn(2+). The short motif at 345 to 349 (KFSTS) is the 'KMSKS' region element. Residue threonine 348 coordinates ATP. A tRNA-binding domain is found at 641 to 741 (EFAKLDLRVG…KEVKLGARIR (101 aa)).

It belongs to the class-I aminoacyl-tRNA synthetase family. MetG type 1 subfamily. Homodimer. Requires Zn(2+) as cofactor.

The protein resides in the cytoplasm. It catalyses the reaction tRNA(Met) + L-methionine + ATP = L-methionyl-tRNA(Met) + AMP + diphosphate. In terms of biological role, is required not only for elongation of protein synthesis but also for the initiation of all mRNA translation through initiator tRNA(fMet) aminoacylation. The chain is Methionine--tRNA ligase from Thermococcus kodakarensis (strain ATCC BAA-918 / JCM 12380 / KOD1) (Pyrococcus kodakaraensis (strain KOD1)).